The following is a 201-amino-acid chain: Small ribosomal subunit protein uS4c (201 aa).

The S4 RNA-binding domain maps to 89-152 (MRLDNILFRL…NSRTLVQNLI (64 aa)).

The protein belongs to the universal ribosomal protein uS4 family. As to quaternary structure, part of the 30S ribosomal subunit. Contacts protein S5. The interaction surface between S4 and S5 is involved in control of translational fidelity.

Its subcellular location is the plastid. The protein localises to the chloroplast. In terms of biological role, one of the primary rRNA binding proteins, it binds directly to 16S rRNA where it nucleates assembly of the body of the 30S subunit. Functionally, with S5 and S12 plays an important role in translational accuracy. The chain is Small ribosomal subunit protein uS4c (rps4) from Crucihimalaya wallichii (Rock-cress).